The chain runs to 386 residues: Patatin-04/09 (386 aa).

Residues M1–A23 form the signal peptide. Residues L32–L229 form the PNPLA domain. The GXGXXG motif lies at G36–G41. The GXSXG motif lies at G75–G79. The active-site Nucleophile is the S77. N115 is a glycosylation site (N-linked (GlcNAc...) asparagine). D215 (proton acceptor) is an active-site residue. A DGA/G motif is present at residues D215–G217. Residues E321–A384 adopt a coiled-coil conformation. N-linked (GlcNAc...) asparagine glycosylation occurs at N325.

Belongs to the patatin family. Tuber.

It localises to the vacuole. Functionally, probable lipolytic acyl hydrolase (LAH), an activity which is thought to be involved in the response of tubers to pathogens. In Solanum tuberosum (Potato), this protein is Patatin-04/09.